The primary structure comprises 326 residues: Microtubule-associated protein RP/EB family member 2 (326 aa).

Ser9 carries the phosphoserine modification. Residues Thr56 to Asp158 form the Calponin-homology (CH) domain. The residue at position 166 (Tyr166) is a Phosphotyrosine. 2 disordered regions span residues Glu170–Leu239 and Tyr297–Tyr326. The interval Gln186–Tyr326 is DCTN1-binding. Low complexity predominate over residues Ser199–Ser233. Phosphoserine occurs at positions 218 and 235. Residues Ser235–Gln305 form the EB1 C-terminal domain. An APC-binding region spans residues Glu258–Glu301. A compositionally biased stretch (acidic residues) spans Asp300 to Glu312. Low complexity predominate over residues Asp317–Tyr326.

The protein belongs to the MAPRE family. In terms of assembly, interacts with DCTN1. Interacts with APC (via C-terminal). Interacts with monomeric and polymerized tubulin. Interacts with SLAIN1. Interacts (via the N-terminal region) with BAG1. Interacts with ASB14. Post-translationally, ubiquitinated in an ASB14-dependent manner; leading to proteasomal degradation. Phosphorylated at Ser-235 by CK2 leading to enhanced cell adhesion. Phosphorylated by CDK1 and AURKB during mitosis reduces the binding affinity of MAPRE2 for microtubules. As to expression, expressed during early stages of apico-basal epithelial differentiation but down-regulated in most cells at later stages.

The protein localises to the cytoplasm. It localises to the cytoskeleton. Its subcellular location is the spindle. Functionally, adapter protein that is involved in microtubule polymerization, and spindle function by stabilizing microtubules and anchoring them at centrosomes. Therefore, ensures mitotic progression and genome stability. Acts as a central regulator of microtubule reorganization in apico-basal epithelial differentiation. Plays a role during oocyte meiosis by regulating microtubule dynamics. Participates in neurite growth by interacting with plexin B3/PLXNB3 and microtubule reorganization during apico-basal epithelial differentiation. Plays also an essential role for cell migration and focal adhesion dynamics. Mechanistically, recruits HAX1 to microtubules in order to regulate focal adhesion dynamics. This is Microtubule-associated protein RP/EB family member 2 (Mapre2) from Mus musculus (Mouse).